The primary structure comprises 462 residues: L-seryl-tRNA(Sec) selenium transferase (462 aa).

At lysine 292 the chain carries N6-(pyridoxal phosphate)lysine.

The protein belongs to the SelA family. It depends on pyridoxal 5'-phosphate as a cofactor.

Its subcellular location is the cytoplasm. It carries out the reaction L-seryl-tRNA(Sec) + selenophosphate + H(+) = L-selenocysteinyl-tRNA(Sec) + phosphate. It functions in the pathway aminoacyl-tRNA biosynthesis; selenocysteinyl-tRNA(Sec) biosynthesis; selenocysteinyl-tRNA(Sec) from L-seryl-tRNA(Sec) (bacterial route): step 1/1. Converts seryl-tRNA(Sec) to selenocysteinyl-tRNA(Sec) required for selenoprotein biosynthesis. The protein is L-seryl-tRNA(Sec) selenium transferase of Geobacter metallireducens (strain ATCC 53774 / DSM 7210 / GS-15).